Reading from the N-terminus, the 312-residue chain is Methionyl-tRNA formyltransferase (312 aa).

117 to 120 (SLLP) contributes to the (6S)-5,6,7,8-tetrahydrofolate binding site.

The protein belongs to the Fmt family.

It carries out the reaction L-methionyl-tRNA(fMet) + (6R)-10-formyltetrahydrofolate = N-formyl-L-methionyl-tRNA(fMet) + (6S)-5,6,7,8-tetrahydrofolate + H(+). Functionally, attaches a formyl group to the free amino group of methionyl-tRNA(fMet). The formyl group appears to play a dual role in the initiator identity of N-formylmethionyl-tRNA by promoting its recognition by IF2 and preventing the misappropriation of this tRNA by the elongation apparatus. The protein is Methionyl-tRNA formyltransferase of Bordetella pertussis (strain Tohama I / ATCC BAA-589 / NCTC 13251).